Reading from the N-terminus, the 158-residue chain is MTHQRHRREVVARLLRARRIGTQEELLEALRAGGIEATQATLSRDLAQLGARRVSRPEGGTVYELPAGAAERDGLATLRGLVSEVASNASLVVIRTHPGSAPAIARAIDLAGLPDVLGTIAGDDTIFVAPAGELRARKLATRLADLLGAPVAGEGPAQ.

Belongs to the ArgR family.

The protein resides in the cytoplasm. It functions in the pathway amino-acid biosynthesis; L-arginine biosynthesis [regulation]. Its function is as follows. Regulates arginine biosynthesis genes. The chain is Arginine repressor from Anaeromyxobacter sp. (strain Fw109-5).